The following is a 288-amino-acid chain: Sulfhydrogenase 2 subunit gamma (288 aa).

One can recognise an FAD-binding FR-type domain in the interval 4–103 (YRSYDARIIE…RGPYGNGFPM (100 aa)). [2Fe-2S] cluster-binding residues include Cys-250, Cys-255, Cys-258, and Cys-270.

As to quaternary structure, dimer of heterotetramer of alpha, beta, gamma and delta subunits. The nickel-containing alpha and delta subunits constitute the hydrogenase activity. The beta and gamma subunits (flavin-containing dimer) constitute the sulfur reductase activity. FAD serves as cofactor. The cofactor is [2Fe-2S] cluster.

The protein localises to the cytoplasm. The enzyme catalyses n sulfur + H2 = (n-1) sulfur + hydrogen sulfide + H(+). In terms of biological role, part of a bifunctional enzyme complex that functions as a hydrogen-evolving hydrogenase with sulfur-reducing activity. May play a role in hydrogen cycling during fermentative growth. Activity exhibited with NAD in addition to NADPH. The beta and gamma subunits form the sulfur-reducing component that catalyzes the cytoplasmic production of hydrogen sulfide in the presence of elemental sulfur. The polypeptide is Sulfhydrogenase 2 subunit gamma (Pyrococcus furiosus (strain ATCC 43587 / DSM 3638 / JCM 8422 / Vc1)).